The sequence spans 220 residues: Deoxyribose-phosphate aldolase (220 aa).

The Proton donor/acceptor role is filled by aspartate 89. Residue lysine 152 is the Schiff-base intermediate with acetaldehyde of the active site. Lysine 181 functions as the Proton donor/acceptor in the catalytic mechanism.

Belongs to the DeoC/FbaB aldolase family. DeoC type 1 subfamily.

The protein resides in the cytoplasm. The enzyme catalyses 2-deoxy-D-ribose 5-phosphate = D-glyceraldehyde 3-phosphate + acetaldehyde. Its pathway is carbohydrate degradation; 2-deoxy-D-ribose 1-phosphate degradation; D-glyceraldehyde 3-phosphate and acetaldehyde from 2-deoxy-alpha-D-ribose 1-phosphate: step 2/2. In terms of biological role, catalyzes a reversible aldol reaction between acetaldehyde and D-glyceraldehyde 3-phosphate to generate 2-deoxy-D-ribose 5-phosphate. This is Deoxyribose-phosphate aldolase from Enterococcus faecalis (strain ATCC 700802 / V583).